A 530-amino-acid chain; its full sequence is Laccase-2 (530 aa).

The first 23 residues, Met1–Ala23, serve as a signal peptide directing secretion. Plastocyanin-like domains lie at Asn36–Glu154 and Thr167–Asn311. N-linked (GlcNAc...) asparagine glycosylation occurs at Asn82. Residues His88 and His90 each coordinate Cu cation. 2 cysteine pairs are disulfide-bonded: Cys109–Cys520 and Cys141–Cys228. An N-linked (GlcNAc...) asparagine glycan is attached at Asn120. Positions 133 and 135 each coordinate Cu cation. 8 N-linked (GlcNAc...) asparagine glycosylation sites follow: Asn191, Asn240, Asn292, Asn311, Asn366, Asn375, Asn392, and Asn412. Residues Tyr379–Gln504 enclose the Plastocyanin-like 3 domain. Residues His428, His431, His433, His484, Cys485, His486, and His490 each coordinate Cu cation.

The protein belongs to the multicopper oxidase family. Cu cation is required as a cofactor.

The protein localises to the secreted. It catalyses the reaction 4 hydroquinone + O2 = 4 benzosemiquinone + 2 H2O. Inhibited by chloride ions. Inhibited by citrate. Inhibited by oxalate. Activated by acetate. Its function is as follows. In vitro, has activity towards 2,2'-azino-bis(3-ethylbenzthiazoline-6-sulfonic acid) (ABTS), 2,6-dimethoxy-phenol, and guaiacol. Although brown rot fungi preferentially degrade hemicellulose and cellulose, the enzyme may contribute to generating small amounts of lignin breakdown products required for catalytic reactions. The protein is Laccase-2 of Fomitopsis schrenkii (Brown rot fungus).